The chain runs to 233 residues: Small ribosomal subunit protein uS3 (233 aa).

The region spanning 28 to 96 (EFADNLDSDF…LRKVVADIAG (69 aa)) is the KH type-2 domain.

It belongs to the universal ribosomal protein uS3 family. In terms of assembly, part of the 30S ribosomal subunit. Forms a tight complex with proteins S10 and S14.

Binds the lower part of the 30S subunit head. Binds mRNA in the 70S ribosome, positioning it for translation. This is Small ribosomal subunit protein uS3 from Shigella flexneri.